A 249-amino-acid chain; its full sequence is NAD(P)H-hydrate epimerase (249 aa).

The 223-residue stretch at 11-233 (AQQIDVELMS…ELGKKHELNI (223 aa)) folds into the YjeF N-terminal domain. 62 to 66 (NQGGD) provides a ligand contact to (6S)-NADPHX. Residues Gln63 and Asp127 each coordinate K(+). (6S)-NADPHX-binding positions include 131-137 (GFSFQPP) and Asp162. Residue Ser165 coordinates K(+).

It belongs to the NnrE/AIBP family. K(+) serves as cofactor.

It is found in the cytoplasm. The protein localises to the mitochondrion. The enzyme catalyses (6R)-NADHX = (6S)-NADHX. It catalyses the reaction (6R)-NADPHX = (6S)-NADPHX. Its function is as follows. Catalyzes the epimerization of the S- and R-forms of NAD(P)HX, a damaged form of NAD(P)H that is a result of enzymatic or heat-dependent hydration. This is a prerequisite for the S-specific NAD(P)H-hydrate dehydratase to allow the repair of both epimers of NAD(P)HX. This chain is NAD(P)H-hydrate epimerase, found in Cryptococcus neoformans var. neoformans serotype D (strain JEC21 / ATCC MYA-565) (Filobasidiella neoformans).